Reading from the N-terminus, the 242-residue chain is MPRGFTWLRYLGIFLGVALGNEPLEMWPLTQNEECTVTGFLRDKLQYRSRLQYMKHYFPINYKISVPYEGVFRIANVTRLQRAQVSERELRYLWVLVSLSATESVQDVLLEGHPSWKYLQEVETLLLNVQQGLTDVEVSPKVESVLSLLNAPGPNLKLVRPKALLDNCFRVMELLYCSCCKQSSVLNWQDCEVPSPQSCSPEPSLQYAATQLYPPPPWSPSSPPHSTGSVRPVRAQGEGLLP.

The signal sequence occupies residues 1-20 (MPRGFTWLRYLGIFLGVALG). Asparagine 76 is a glycosylation site (N-linked (GlcNAc...) asparagine). The tract at residues 210–242 (TQLYPPPPWSPSSPPHSTGSVRPVRAQGEGLLP) is disordered. A compositionally biased stretch (pro residues) spans 213 to 223 (YPPPPWSPSSP).

Belongs to the IL-34 family. In terms of assembly, homodimer. Interacts with CSF1R. As to expression, detected in the sinusoidal epithelium in the red pulp of spleen (at protein level). Predominantly expressed in spleen. Also detected in a range of other tissues including heart, brain, lung, liver, kidney, thymus, testis, ovary, small intestine, prostate and colon.

The protein localises to the secreted. In terms of biological role, cytokine that promotes the proliferation, survival and differentiation of monocytes and macrophages. Promotes the release of pro-inflammatory chemokines, and thereby plays an important role in innate immunity and in inflammatory processes. Plays an important role in the regulation of osteoclast proliferation and differentiation, and in the regulation of bone resorption. Signaling via CSF1R and its downstream effectors stimulates phosphorylation of MAPK1/ERK2 AND MAPK3/ERK1. This chain is Interleukin-34 (IL34), found in Homo sapiens (Human).